The sequence spans 453 residues: Aldehyde dehydrogenase, dimeric NADP-preferring (453 aa).

Position 2 is an N-acetylserine (Ser2). An N6-acetyllysine modification is found at Lys178. 188–193 (GNTAVG) serves as a coordination point for NAD(+). Lys194 carries the N6-acetyllysine modification. Residues Glu210 and Cys244 contribute to the active site.

Belongs to the aldehyde dehydrogenase family. In terms of assembly, homodimer.

The protein resides in the cytoplasm. It catalyses the reaction an aldehyde + NAD(+) + H2O = a carboxylate + NADH + 2 H(+). The catalysed reaction is octanal + NAD(+) + H2O = octanoate + NADH + 2 H(+). Functionally, ALDHs play a major role in the detoxification of alcohol-derived acetaldehyde. They are involved in the metabolism of corticosteroids, biogenic amines, neurotransmitters, and lipid peroxidation. Oxidizes medium and long chain aldehydes into non-toxic fatty acids. Preferentially oxidizes aromatic aldehyde substrates. Comprises about 50 percent of corneal epithelial soluble proteins. May play a role in preventing corneal damage caused by ultraviolet light. This Canis lupus familiaris (Dog) protein is Aldehyde dehydrogenase, dimeric NADP-preferring (ALDH3A1).